A 181-amino-acid polypeptide reads, in one-letter code: MFALREKYKNEIISQLKSELNMSNPMLLPKLEKIVISVGAGDYAKDSKIMQNIADTISLIAGQKAVITLAKKSVAGFKMREGMPMGVKVTLRGKMMYNFLEKLIVIALPRVKDFRGLKRNGFDGRGNYSFGLNEQLMFPEVVYDDIMVTHGMNITIVTSTHSDKEAFKLLELLGMPFAKGR.

This sequence belongs to the universal ribosomal protein uL5 family. Part of the 50S ribosomal subunit; part of the 5S rRNA/L5/L18/L25 subcomplex. Contacts the 5S rRNA and the P site tRNA. Forms a bridge to the 30S subunit in the 70S ribosome.

This is one of the proteins that bind and probably mediate the attachment of the 5S RNA into the large ribosomal subunit, where it forms part of the central protuberance. In the 70S ribosome it contacts protein S13 of the 30S subunit (bridge B1b), connecting the 2 subunits; this bridge is implicated in subunit movement. Contacts the P site tRNA; the 5S rRNA and some of its associated proteins might help stabilize positioning of ribosome-bound tRNAs. The polypeptide is Large ribosomal subunit protein uL5 (Helicobacter hepaticus (strain ATCC 51449 / 3B1)).